Here is a 552-residue protein sequence, read N- to C-terminus: CTP synthase (552 aa).

The amidoligase domain stretch occupies residues 1–270 (MTKYVFVTGG…DRIICEELKL (270 aa)). S13 lines the CTP pocket. S13 lines the UTP pocket. Residues 14–19 (SLGKGI) and D71 each bind ATP. D71 and E144 together coordinate Mg(2+). CTP contacts are provided by residues 151–153 (DIE), 191–196 (KTKPTQ), and K227. Residues 191 to 196 (KTKPTQ) and K227 each bind UTP. The 253-residue stretch at 295 to 547 (TIGMVGKYVD…VEAAFANKQA (253 aa)) folds into the Glutamine amidotransferase type-1 domain. G356 is an L-glutamine binding site. Catalysis depends on C383, which acts as the Nucleophile; for glutamine hydrolysis. Residues 384–387 (LGMQ), E407, and R473 contribute to the L-glutamine site. Residues H520 and E522 contribute to the active site.

It belongs to the CTP synthase family. As to quaternary structure, homotetramer.

The enzyme catalyses UTP + L-glutamine + ATP + H2O = CTP + L-glutamate + ADP + phosphate + 2 H(+). It carries out the reaction L-glutamine + H2O = L-glutamate + NH4(+). The catalysed reaction is UTP + NH4(+) + ATP = CTP + ADP + phosphate + 2 H(+). It functions in the pathway pyrimidine metabolism; CTP biosynthesis via de novo pathway; CTP from UDP: step 2/2. Its activity is regulated as follows. Allosterically activated by GTP, when glutamine is the substrate; GTP has no effect on the reaction when ammonia is the substrate. The allosteric effector GTP functions by stabilizing the protein conformation that binds the tetrahedral intermediate(s) formed during glutamine hydrolysis. Inhibited by the product CTP, via allosteric rather than competitive inhibition. Catalyzes the ATP-dependent amination of UTP to CTP with either L-glutamine or ammonia as the source of nitrogen. Regulates intracellular CTP levels through interactions with the four ribonucleotide triphosphates. In Burkholderia ambifaria (strain ATCC BAA-244 / DSM 16087 / CCUG 44356 / LMG 19182 / AMMD) (Burkholderia cepacia (strain AMMD)), this protein is CTP synthase.